A 265-amino-acid chain; its full sequence is Polyglutamine-binding protein 1 (265 aa).

Residues 46 to 80 (EGLPPSWYKVFDPSCGLPYYWNADTDLVSWLSPHD) enclose the WW domain. Phosphoserine is present on Ser94. A disordered region spans residues 94–265 (SSNADAEEKL…AEASRTKQQD (172 aa)). Positions 99–175 (AEEKLDRSHD…DKADREEGKE (77 aa)) are enriched in basic and acidic residues. 15 repeat units span residues 104-110 (DRSHDKS), 111-117 (DRGHDKS), 118-124 (DRSHEKL), 125-131 (DRGHDKS), 132-138 (DRGHDKS), 139-140 (DR), 141-142 (DR), 143-144 (ER), 150-151 (DR), 152-153 (ER), 154-155 (ER), 156-157 (DR), 158-159 (ER), 160-161 (DR), and 162-163 (DR). The tract at residues 104–138 (DRSHDKSDRGHDKSDRSHEKLDRGHDKSDRGHDKS) is 5 X 7 AA approximate tandem repeats of D-R-[SG]-H-D-K-S. The segment at 139–144 (DRDRER) is 3 X 2 AA tandem repeats of [DE]-R. The interval 150-163 (DRERERDRERDRDR) is 7 X 2 AA tandem repeats of [DE]-R. The interval 245–255 (YPSPGAVLRAN) is important for interaction with TXNL4A. A Phosphoserine modification is found at Ser247.

As to quaternary structure, interacts with POU3F2/Brn-2, ATXN1, TXNL4A, HTT and AR. Interaction with ATXN1 correlates positively with the length of the polyglutamine tract. Interacts with RNA polymerase II large subunit in a phosphorylation-dependent manner. Forms a ternary complex with ATXN1 mutant and phosphorylated RNA polymerase II. Interacts (via C-terminus) with TXNL4A and CD2BP2. Interacts (via WW domain) with ATN1 and SF3B1, and may interact with additional splice factors. Interacts (via WW domain) with WBP11; Leading to reduce interaction between PQBP1 and TXNL4A. Interacts with CAPRIN1. Interacts with DDX1. Interacts with SFPQ. Interacts with KHSRP.

Its subcellular location is the nucleus. It is found in the nucleus speckle. The protein resides in the cytoplasmic granule. In terms of biological role, intrinsically disordered protein that acts as a scaffold, and which is involved in different processes, such as pre-mRNA splicing, transcription regulation, innate immunity and neuron development. Interacts with splicing-related factors via the intrinsically disordered region and regulates alternative splicing of target pre-mRNA species. May suppress the ability of POU3F2 to transactivate the DRD1 gene in a POU3F2 dependent manner. Can activate transcription directly or via association with the transcription machinery. May be involved in ATXN1 mutant-induced cell death. The interaction with ATXN1 mutant reduces levels of phosphorylated RNA polymerase II large subunit. Involved in the assembly of cytoplasmic stress granule, possibly by participating in the transport of neuronal RNA granules. Also acts as an innate immune sensor of infection by retroviruses, by detecting the presence of reverse-transcribed DNA in the cytosol. Directly binds retroviral reverse-transcribed DNA in the cytosol and interacts with CGAS, leading to activate the cGAS-STING signaling pathway, triggering type-I interferon production. This is Polyglutamine-binding protein 1 (PQBP1) from Gorilla gorilla gorilla (Western lowland gorilla).